A 368-amino-acid chain; its full sequence is GLABROUS1 enhancer-binding protein-like (368 aa).

The tract at residues 1-123 is disordered; that stretch reads MAPKKAEEVV…TSDTEHVKKP (123 aa). The segment covering 17-31 has biased composition (acidic residues); that stretch reads SEEEESGSSGEESES. The segment covering 35-47 has biased composition (basic and acidic residues); sequence VPKKVESSQKPES. The segment covering 84 to 97 has biased composition (polar residues); that stretch reads TSGSAATVPESSTA. The segment covering 100-123 has biased composition (basic and acidic residues); the sequence is PLKEAAPEAIKKQKTSDTEHVKKP.

This sequence belongs to the GeBP family. Mono-, di- and oligomers. Associated with the Mediator complex. Interacts with MED6. Interacts with MED10A, MED28 and MED32. Interacts with DEK3.

The protein resides in the nucleus. Its function is as follows. Transcription factor that binds promoters containing the CryR2 element, 5'-ACATAWCT-3'. The DNA-binding activity is decreased upon direct physical interaction with the mediator subunits and is modulated by redox conditions. The oxidized protein is the preferential binding form. The sequence is that of GLABROUS1 enhancer-binding protein-like from Arabidopsis thaliana (Mouse-ear cress).